A 224-amino-acid polypeptide reads, in one-letter code: Probable proteasome subunit beta type-4 (224 aa).

It belongs to the peptidase T1B family. As to quaternary structure, the 26S proteasome consists of a 20S proteasome core and two 19S regulatory subunits. The 20S proteasome core is composed of 28 subunits that are arranged in four stacked rings, resulting in a barrel-shaped structure. The two end rings are each formed by seven alpha subunits, and the two central rings are each formed by seven beta subunits. The catalytic chamber with the active sites is on the inside of the barrel.

The protein localises to the cytoplasm. Its subcellular location is the nucleus. Its function is as follows. Non-catalytic component of the proteasome, a multicatalytic proteinase complex which is characterized by its ability to cleave peptides with Arg, Phe, Tyr, Leu, and Glu adjacent to the leaving group at neutral or slightly basic pH. The proteasome has an ATP-dependent proteolytic activity. The sequence is that of Probable proteasome subunit beta type-4 (CPR1) from Cryptococcus neoformans var. neoformans serotype D (strain B-3501A) (Filobasidiella neoformans).